An 89-amino-acid chain; its full sequence is Cell division topological specificity factor (89 aa).

This sequence belongs to the MinE family.

Functionally, prevents the cell division inhibition by proteins MinC and MinD at internal division sites while permitting inhibition at polar sites. This ensures cell division at the proper site by restricting the formation of a division septum at the midpoint of the long axis of the cell. The protein is Cell division topological specificity factor of Serratia proteamaculans (strain 568).